We begin with the raw amino-acid sequence, 137 residues long: Ribonuclease VapC18 (137 aa).

One can recognise a PINc domain in the interval 4 to 126; that stretch reads CVDTSAWHHA…YDRVAAITGQ (123 aa). Asp-6 and Asp-96 together coordinate Mg(2+).

It belongs to the PINc/VapC protein family. Mg(2+) is required as a cofactor.

Toxic component of a type II toxin-antitoxin (TA) system. An RNase. The cognate antitoxin is VapB18. This chain is Ribonuclease VapC18, found in Mycobacterium tuberculosis (strain ATCC 25618 / H37Rv).